A 177-amino-acid chain; its full sequence is Adenine phosphoribosyltransferase (177 aa).

This sequence belongs to the purine/pyrimidine phosphoribosyltransferase family. Homodimer.

The protein localises to the cytoplasm. The enzyme catalyses AMP + diphosphate = 5-phospho-alpha-D-ribose 1-diphosphate + adenine. The protein operates within purine metabolism; AMP biosynthesis via salvage pathway; AMP from adenine: step 1/1. Catalyzes a salvage reaction resulting in the formation of AMP, that is energically less costly than de novo synthesis. The polypeptide is Adenine phosphoribosyltransferase (Leptospira interrogans serogroup Icterohaemorrhagiae serovar copenhageni (strain Fiocruz L1-130)).